The sequence spans 157 residues: Large ribosomal subunit protein uL15 (157 aa).

The disordered stretch occupies residues 1–40 (MKLHELSDNPGATKKRMRIGRGPGSGKGKMGGRGIKGQKS). Gly residues predominate over residues 21–35 (RGPGSGKGKMGGRGI).

This sequence belongs to the universal ribosomal protein uL15 family. Part of the 50S ribosomal subunit.

Binds to the 23S rRNA. This chain is Large ribosomal subunit protein uL15, found in Ruegeria pomeroyi (strain ATCC 700808 / DSM 15171 / DSS-3) (Silicibacter pomeroyi).